Reading from the N-terminus, the 462-residue chain is Cysteine--tRNA ligase (462 aa).

A Zn(2+)-binding site is contributed by cysteine 27. A 'HIGH' region motif is present at residues proline 29–asparagine 39. Cysteine 209, histidine 234, and glutamate 238 together coordinate Zn(2+). Positions lysine 266 to serine 270 match the 'KMSKS' region motif. Lysine 269 contacts ATP.

It belongs to the class-I aminoacyl-tRNA synthetase family. Monomer. Zn(2+) is required as a cofactor.

Its subcellular location is the cytoplasm. It carries out the reaction tRNA(Cys) + L-cysteine + ATP = L-cysteinyl-tRNA(Cys) + AMP + diphosphate. This is Cysteine--tRNA ligase from Finegoldia magna (strain ATCC 29328 / DSM 20472 / WAL 2508) (Peptostreptococcus magnus).